Consider the following 126-residue polypeptide: Histone H2B type 1-M (126 aa).

Residues 1-36 are disordered; that stretch reads MPEPVKSAPVPKKGSKKAINKAQKKDGKKRKRSRKE. P2 is subject to N-acetylproline. Position 3 is an ADP-ribosyl glutamic acid (E3). K6 bears the N6-(2-hydroxyisobutyryl)lysine; alternate mark. K6 carries the post-translational modification N6-(beta-hydroxybutyryl)lysine; alternate. The residue at position 6 (K6) is an N6-acetyllysine; alternate. Residue K6 is modified to N6-butyryllysine; alternate. At K6 the chain carries N6-crotonyllysine; alternate. N6-lactoyllysine; alternate is present on K6. K6 participates in a covalent cross-link: Glycyl lysine isopeptide (Lys-Gly) (interchain with G-Cter in SUMO2); alternate. Residue S7 is modified to ADP-ribosylserine. Position 12 is an N6-(beta-hydroxybutyryl)lysine; alternate (K12). 2 positions are modified to N6-acetyllysine; alternate: K12 and K13. 2 positions are modified to N6-crotonyllysine; alternate: K12 and K13. K12 carries the N6-lactoyllysine; alternate modification. K13 is subject to N6-(2-hydroxyisobutyryl)lysine; alternate. S15 carries the phosphoserine; by STK4/MST1 modification. K16, K17, K21, and K24 each carry N6-acetyllysine; alternate. An N6-crotonyllysine; alternate mark is found at K16, K17, K21, and K24. An N6-lactoyllysine; alternate mark is found at K16, K17, K21, and K24. N6-(beta-hydroxybutyryl)lysine; alternate occurs at positions 17 and 21. K17 carries the post-translational modification N6-glutaryllysine; alternate. Residues K21 and K24 each carry the N6-(2-hydroxyisobutyryl)lysine; alternate modification. K21 is modified (N6-butyryllysine; alternate). K21 is covalently cross-linked (Glycyl lysine isopeptide (Lys-Gly) (interchain with G-Cter in SUMO2); alternate). K25 carries the N6-(2-hydroxyisobutyryl)lysine modification. K35 carries the N6-(2-hydroxyisobutyryl)lysine; alternate modification. An N6-(beta-hydroxybutyryl)lysine; alternate modification is found at K35. Residue K35 is modified to N6-crotonyllysine; alternate. K35 carries the N6-glutaryllysine; alternate modification. K35 carries the post-translational modification N6-succinyllysine; alternate. K35 participates in a covalent cross-link: Glycyl lysine isopeptide (Lys-Gly) (interchain with G-Cter in ubiquitin); alternate. The residue at position 36 (E36) is a PolyADP-ribosyl glutamic acid. The residue at position 37 (S37) is a Phosphoserine; by AMPK. An N6-(2-hydroxyisobutyryl)lysine; alternate mark is found at K44, K47, and K58. N6-lactoyllysine; alternate is present on K44. 2 positions are modified to N6-glutaryllysine; alternate: K44 and K47. K47 is modified (N6-methyllysine; alternate). K58 carries the N6,N6-dimethyllysine; alternate modification. Dimethylated arginine is present on R80. N6-(2-hydroxyisobutyryl)lysine; alternate is present on K86. At K86 the chain carries N6-(beta-hydroxybutyryl)lysine; alternate. At K86 the chain carries N6-acetyllysine; alternate. K86 is subject to N6-lactoyllysine; alternate. At K86 the chain carries N6,N6,N6-trimethyllysine; alternate. Omega-N-methylarginine is present on residues R87 and R93. K109 is modified (N6-(2-hydroxyisobutyryl)lysine; alternate). Position 109 is an N6-lactoyllysine; alternate (K109). K109 carries the N6-glutaryllysine; alternate modification. At K109 the chain carries N6-methyllysine; alternate. S113 is a glycosylation site (O-linked (GlcNAc) serine). T116 is subject to Phosphothreonine. N6-(2-hydroxyisobutyryl)lysine; alternate occurs at positions 117 and 121. 2 positions are modified to N6-(beta-hydroxybutyryl)lysine; alternate: K117 and K121. N6-lactoyllysine; alternate is present on residues K117 and K121. K117 and K121 each carry N6-glutaryllysine; alternate. K117 and K121 each carry N6-succinyllysine; alternate. K117 carries the N6-malonyllysine; alternate modification. K117 bears the N6-methylated lysine; alternate mark. K121 is covalently cross-linked (Glycyl lysine isopeptide (Lys-Gly) (interchain with G-Cter in ubiquitin); alternate).

This sequence belongs to the histone H2B family. The nucleosome is a histone octamer containing two molecules each of H2A, H2B, H3 and H4 assembled in one H3-H4 heterotetramer and two H2A-H2B heterodimers. The octamer wraps approximately 147 bp of DNA. In terms of processing, monoubiquitination at Lys-35 (H2BK34Ub) by the MSL1/MSL2 dimer is required for histone H3 'Lys-4' (H3K4me) and 'Lys-79' (H3K79me) methylation and transcription activation at specific gene loci, such as HOXA9 and MEIS1 loci. Similarly, monoubiquitination at Lys-121 (H2BK120Ub) by the RNF20/40 complex gives a specific tag for epigenetic transcriptional activation and is also prerequisite for histone H3 'Lys-4' and 'Lys-79' methylation. It also functions cooperatively with the FACT dimer to stimulate elongation by RNA polymerase II. H2BK120Ub also acts as a regulator of mRNA splicing: deubiquitination by USP49 is required for efficient cotranscriptional splicing of a large set of exons. Phosphorylation at Ser-37 (H2BS36ph) by AMPK in response to stress promotes transcription. Phosphorylated on Ser-15 (H2BS14ph) by STK4/MST1 during apoptosis; which facilitates apoptotic chromatin condensation. Also phosphorylated on Ser-15 in response to DNA double strand breaks (DSBs), and in correlation with somatic hypermutation and immunoglobulin class-switch recombination. Post-translationally, glcNAcylation at Ser-113 promotes monoubiquitination of Lys-121. It fluctuates in response to extracellular glucose, and associates with transcribed genes. In terms of processing, ADP-ribosylated by PARP1 or PARP2 on Ser-7 (H2BS6ADPr) in response to DNA damage. H2BS6ADPr promotes recruitment of CHD1L. Mono-ADP-ribosylated on Glu-3 (H2BE2ADPr) by PARP3 in response to single-strand breaks. Poly ADP-ribosylation on Glu-36 (H2BE35ADPr) by PARP1 regulates adipogenesis: it inhibits phosphorylation at Ser-37 (H2BS36ph), thereby blocking expression of pro-adipogenetic genes. Crotonylation (Kcr) is specifically present in male germ cells and marks testis-specific genes in post-meiotic cells, including X-linked genes that escape sex chromosome inactivation in haploid cells. Crotonylation marks active promoters and enhancers and confers resistance to transcriptional repressors. It is also associated with post-meiotically activated genes on autosomes. Post-translationally, lactylated in macrophages by EP300/P300 by using lactoyl-CoA directly derived from endogenous or exogenous lactate, leading to stimulates gene transcription.

It localises to the nucleus. The protein localises to the chromosome. Its function is as follows. Core component of nucleosome. Nucleosomes wrap and compact DNA into chromatin, limiting DNA accessibility to the cellular machineries which require DNA as a template. Histones thereby play a central role in transcription regulation, DNA repair, DNA replication and chromosomal stability. DNA accessibility is regulated via a complex set of post-translational modifications of histones, also called histone code, and nucleosome remodeling. This is Histone H2B type 1-M from Homo sapiens (Human).